A 195-amino-acid polypeptide reads, in one-letter code: Imidazoleglycerol-phosphate dehydratase (195 aa).

It belongs to the imidazoleglycerol-phosphate dehydratase family.

Its subcellular location is the cytoplasm. It catalyses the reaction D-erythro-1-(imidazol-4-yl)glycerol 3-phosphate = 3-(imidazol-4-yl)-2-oxopropyl phosphate + H2O. Its pathway is amino-acid biosynthesis; L-histidine biosynthesis; L-histidine from 5-phospho-alpha-D-ribose 1-diphosphate: step 6/9. The polypeptide is Imidazoleglycerol-phosphate dehydratase (Shouchella clausii (strain KSM-K16) (Alkalihalobacillus clausii)).